The sequence spans 619 residues: Dihydroxy-acid dehydratase (619 aa).

D81 lines the Mg(2+) pocket. C122 lines the [2Fe-2S] cluster pocket. 2 residues coordinate Mg(2+): D123 and K124. Position 124 is an N6-carboxylysine (K124). C195 provides a ligand contact to [2Fe-2S] cluster. Residue E494 participates in Mg(2+) binding. S520 acts as the Proton acceptor in catalysis.

It belongs to the IlvD/Edd family. In terms of assembly, homodimer. [2Fe-2S] cluster is required as a cofactor. The cofactor is Mg(2+).

It catalyses the reaction (2R)-2,3-dihydroxy-3-methylbutanoate = 3-methyl-2-oxobutanoate + H2O. The catalysed reaction is (2R,3R)-2,3-dihydroxy-3-methylpentanoate = (S)-3-methyl-2-oxopentanoate + H2O. It functions in the pathway amino-acid biosynthesis; L-isoleucine biosynthesis; L-isoleucine from 2-oxobutanoate: step 3/4. The protein operates within amino-acid biosynthesis; L-valine biosynthesis; L-valine from pyruvate: step 3/4. Functions in the biosynthesis of branched-chain amino acids. Catalyzes the dehydration of (2R,3R)-2,3-dihydroxy-3-methylpentanoate (2,3-dihydroxy-3-methylvalerate) into 2-oxo-3-methylpentanoate (2-oxo-3-methylvalerate) and of (2R)-2,3-dihydroxy-3-methylbutanoate (2,3-dihydroxyisovalerate) into 2-oxo-3-methylbutanoate (2-oxoisovalerate), the penultimate precursor to L-isoleucine and L-valine, respectively. The sequence is that of Dihydroxy-acid dehydratase from Shewanella sp. (strain MR-7).